The sequence spans 699 residues: Elongation factor G (699 aa).

The region spanning 8–283 (EHIRNIGICA…AVVDFLPSPI (276 aa)) is the tr-type G domain. Residues 17 to 24 (AHIDAGKT), 81 to 85 (DTPGH), and 135 to 138 (NKMD) contribute to the GTP site.

This sequence belongs to the TRAFAC class translation factor GTPase superfamily. Classic translation factor GTPase family. EF-G/EF-2 subfamily.

It localises to the cytoplasm. Functionally, catalyzes the GTP-dependent ribosomal translocation step during translation elongation. During this step, the ribosome changes from the pre-translocational (PRE) to the post-translocational (POST) state as the newly formed A-site-bound peptidyl-tRNA and P-site-bound deacylated tRNA move to the P and E sites, respectively. Catalyzes the coordinated movement of the two tRNA molecules, the mRNA and conformational changes in the ribosome. This Rickettsia sibirica (strain ATCC VR-151 / 246) protein is Elongation factor G.